We begin with the raw amino-acid sequence, 178 residues long: PRA1 family protein 2 (178 aa).

The Cytoplasmic portion of the chain corresponds to 1-41 (MSEVRLPPLRALDDFVLGSARLAAPDPGDPQRWCHRVINNL). The helical transmembrane segment at 42–62 (LYYQTNYLLCFGISLALAGYI) threads the bilayer. Over 63-64 (RP) the chain is Extracellular. A helical membrane pass occupies residues 65–85 (LHTLLSALVVVVALGVLVWAA). Over 86–96 (ETRAAVRRCRR) the chain is Cytoplasmic. Residues 97-119 (SHPAACLAAVLAISLFILWAVGG) traverse the membrane as a helical segment. Topologically, residues 120 to 122 (AFT) are extracellular. Residues 123–140 (FLLSITAPVFLILLHASL) traverse the membrane as a helical segment. The Cytoplasmic portion of the chain corresponds to 141-178 (RLRNLKNKIENKIESIGLKRTPMGLLLEALGQEQEAGS).

Belongs to the PRA1 family. Interacts with CCR5 and GDE1.

It is found in the endosome membrane. Functionally, may be involved in ER/Golgi transport and vesicular traffic. Plays a proapoptotic role in cerulenin-induced neuroblastoma apoptosis. This is PRA1 family protein 2 (Praf2) from Mus musculus (Mouse).